Reading from the N-terminus, the 345-residue chain is NADPH dehydrogenase (345 aa).

Ser-23–Cys-26 is a binding site for FMN. Tyr-28 is a substrate binding site. FMN contacts are provided by Ala-60 and Gln-102. Residue His-164–His-167 participates in substrate binding. Residues Arg-215 and Gly-307–Arg-308 contribute to the FMN site.

Belongs to the NADH:flavin oxidoreductase/NADH oxidase family. NamA subfamily. Homotetramer. FMN is required as a cofactor.

It catalyses the reaction A + NADPH + H(+) = AH2 + NADP(+). Functionally, catalyzes the reduction of the double bond of an array of alpha,beta-unsaturated aldehydes and ketones. It also reduces the nitro group of nitroester and nitroaromatic compounds. It could have a role in detoxification processes. The chain is NADPH dehydrogenase from Bacillus cereus (strain ATCC 14579 / DSM 31 / CCUG 7414 / JCM 2152 / NBRC 15305 / NCIMB 9373 / NCTC 2599 / NRRL B-3711).